The primary structure comprises 118 residues: Protein RALF-like 24 (118 aa).

Residues 1-22 (MSRSLALVYLSLLCLQTHLSIS) form the signal peptide. A propeptide spans 23 to 63 (VTVPIPSVNGEIDAMLNRNGVIGEEEGEEMMPSEISRRVMM) (removed in mature form). 2 disulfides stabilise this stretch: Cys81–Cys91 and Cys103–Cys109.

Belongs to the plant rapid alkalinization factor (RALF) family. Proteolytically cleaved, probably by S1P, a subtilisin-like serine protease (subtilase).

It localises to the secreted. Cell signaling peptide that may regulate plant stress, growth, and development. Mediates a rapid alkalinization of extracellular space by mediating a transient increase in the cytoplasmic Ca(2+) concentration leading to a calcium-dependent signaling events through a cell surface receptor and a concomitant activation of some intracellular mitogen-activated protein kinases. In Arabidopsis thaliana (Mouse-ear cress), this protein is Protein RALF-like 24 (RALFL24).